A 351-amino-acid chain; its full sequence is Homoserine O-acetyltransferase (351 aa).

Residues 51 to 334 enclose the AB hydrolase-1 domain; sequence VIWVLHALTG…IYGHDAFLIE (284 aa). The active-site Nucleophile is the serine 146. Residue arginine 212 participates in substrate binding. Active-site residues include aspartate 299 and histidine 328. Aspartate 329 is a substrate binding site.

The protein belongs to the AB hydrolase superfamily. MetX family. In terms of assembly, homodimer.

The protein resides in the cytoplasm. It carries out the reaction L-homoserine + acetyl-CoA = O-acetyl-L-homoserine + CoA. Its pathway is amino-acid biosynthesis; L-methionine biosynthesis via de novo pathway; O-acetyl-L-homoserine from L-homoserine: step 1/1. Its function is as follows. Transfers an acetyl group from acetyl-CoA to L-homoserine, forming acetyl-L-homoserine. This chain is Homoserine O-acetyltransferase, found in Cyclobacterium marinum (strain ATCC 25205 / DSM 745 / LMG 13164 / NCIMB 1802) (Flectobacillus marinus).